The following is a 395-amino-acid chain: Flavohemoprotein (395 aa).

Residues 1–136 (MLDQQTIATI…LANVFIQRES (136 aa)) form the Globin domain. Heme b is bound at residue His-85. Active-site charge relay system residues include Tyr-95 and Glu-135. A reductase region spans residues 147 to 395 (GGWHGIRPFR…YECFGPHKVI (249 aa)). Residues 150–255 (HGIRPFRIVA…AAPHGDFYLE (106 aa)) form the FAD-binding FR-type domain. Residues Tyr-188 and 204–207 (RQYS) each bind FAD. 268-273 (GVGQTP) serves as a coordination point for NADP(+). FAD is bound at residue 388–391 (CFGP).

The protein belongs to the globin family. Two-domain flavohemoproteins subfamily. This sequence in the C-terminal section; belongs to the flavoprotein pyridine nucleotide cytochrome reductase family. It depends on heme b as a cofactor. FAD serves as cofactor.

It is found in the cytoplasm. The catalysed reaction is 2 nitric oxide + NADPH + 2 O2 = 2 nitrate + NADP(+) + H(+). It carries out the reaction 2 nitric oxide + NADH + 2 O2 = 2 nitrate + NAD(+) + H(+). Its function is as follows. Is involved in NO detoxification in an aerobic process, termed nitric oxide dioxygenase (NOD) reaction that utilizes O(2) and NAD(P)H to convert NO to nitrate, which protects the bacterium from various noxious nitrogen compounds. Therefore, plays a central role in the inducible response to nitrosative stress. The sequence is that of Flavohemoprotein (hmp) from Dickeya dadantii (strain 3937) (Erwinia chrysanthemi (strain 3937)).